We begin with the raw amino-acid sequence, 139 residues long: D-ribose pyranase (139 aa).

The active-site Proton donor is His20. Residues Asp28, His106, and 128–130 (YAN) contribute to the substrate site.

The protein belongs to the RbsD / FucU family. RbsD subfamily. In terms of assembly, homodecamer.

Its subcellular location is the cytoplasm. It catalyses the reaction beta-D-ribopyranose = beta-D-ribofuranose. Its pathway is carbohydrate metabolism; D-ribose degradation; D-ribose 5-phosphate from beta-D-ribopyranose: step 1/2. Catalyzes the interconversion of beta-pyran and beta-furan forms of D-ribose. This Glaesserella parasuis serovar 5 (strain SH0165) (Haemophilus parasuis) protein is D-ribose pyranase.